Reading from the N-terminus, the 375-residue chain is uncharacterized protein (375 aa).

A disordered region spans residues 54–78 (EGIPPPTQSQEPLKPQENISRPIHH).

This is an uncharacterized protein from Bos taurus (Bovine).